A 158-amino-acid chain; its full sequence is Transcription elongation factor GreA (158 aa).

Belongs to the GreA/GreB family.

Its function is as follows. Necessary for efficient RNA polymerase transcription elongation past template-encoded arresting sites. The arresting sites in DNA have the property of trapping a certain fraction of elongating RNA polymerases that pass through, resulting in locked ternary complexes. Cleavage of the nascent transcript by cleavage factors such as GreA or GreB allows the resumption of elongation from the new 3'terminus. GreA releases sequences of 2 to 3 nucleotides. The polypeptide is Transcription elongation factor GreA (Ruthia magnifica subsp. Calyptogena magnifica).